Here is a 249-residue protein sequence, read N- to C-terminus: Putative type I specificity subunit S.MpnORF615P (249 aa).

This sequence belongs to the type-I restriction system S methylase family. As to quaternary structure, the methyltransferase is composed of M and S polypeptides.

Functionally, the specificity (S) subunit of a type I methyltransferase (MTase); this subunit dictates DNA sequence specificity. The single R subunit has multiple frameshifts and is probably not expressed. The chain is Putative type I specificity subunit S.MpnORF615P from Mycoplasma pneumoniae (strain ATCC 29342 / M129 / Subtype 1) (Mycoplasmoides pneumoniae).